The sequence spans 432 residues: Asparagine--tRNA ligase (432 aa).

It belongs to the class-II aminoacyl-tRNA synthetase family. Homodimer.

The protein resides in the cytoplasm. It carries out the reaction tRNA(Asn) + L-asparagine + ATP = L-asparaginyl-tRNA(Asn) + AMP + diphosphate + H(+). The chain is Asparagine--tRNA ligase from Lactobacillus gasseri (strain ATCC 33323 / DSM 20243 / BCRC 14619 / CIP 102991 / JCM 1131 / KCTC 3163 / NCIMB 11718 / NCTC 13722 / AM63).